The primary structure comprises 422 residues: Glutamyl-tRNA reductase (422 aa).

Residues 49 to 52, Ser-107, 112 to 114, and Gln-118 contribute to the substrate site; these read TCNR and EPQ. Cys-50 (nucleophile) is an active-site residue. 187–192 is a binding site for NADP(+); the sequence is GAGETI.

Belongs to the glutamyl-tRNA reductase family. Homodimer.

It catalyses the reaction (S)-4-amino-5-oxopentanoate + tRNA(Glu) + NADP(+) = L-glutamyl-tRNA(Glu) + NADPH + H(+). The protein operates within porphyrin-containing compound metabolism; protoporphyrin-IX biosynthesis; 5-aminolevulinate from L-glutamyl-tRNA(Glu): step 1/2. In terms of biological role, catalyzes the NADPH-dependent reduction of glutamyl-tRNA(Glu) to glutamate 1-semialdehyde (GSA). This Pseudomonas aeruginosa (strain ATCC 15692 / DSM 22644 / CIP 104116 / JCM 14847 / LMG 12228 / 1C / PRS 101 / PAO1) protein is Glutamyl-tRNA reductase.